A 156-amino-acid chain; its full sequence is 6,7-dimethyl-8-ribityllumazine synthase (156 aa).

5-amino-6-(D-ribitylamino)uracil contacts are provided by residues phenylalanine 22, 57–59 (AYE), and 81–83 (SVI). 86–87 (GT) contributes to the (2S)-2-hydroxy-3-oxobutyl phosphate binding site. Histidine 89 acts as the Proton donor in catalysis. Phenylalanine 114 contributes to the 5-amino-6-(D-ribitylamino)uracil binding site. Arginine 128 lines the (2S)-2-hydroxy-3-oxobutyl phosphate pocket.

The protein belongs to the DMRL synthase family. As to quaternary structure, forms an icosahedral capsid composed of 60 subunits, arranged as a dodecamer of pentamers.

It carries out the reaction (2S)-2-hydroxy-3-oxobutyl phosphate + 5-amino-6-(D-ribitylamino)uracil = 6,7-dimethyl-8-(1-D-ribityl)lumazine + phosphate + 2 H2O + H(+). The protein operates within cofactor biosynthesis; riboflavin biosynthesis; riboflavin from 2-hydroxy-3-oxobutyl phosphate and 5-amino-6-(D-ribitylamino)uracil: step 1/2. In terms of biological role, catalyzes the formation of 6,7-dimethyl-8-ribityllumazine by condensation of 5-amino-6-(D-ribitylamino)uracil with 3,4-dihydroxy-2-butanone 4-phosphate. This is the penultimate step in the biosynthesis of riboflavin. The protein is 6,7-dimethyl-8-ribityllumazine synthase of Photobacterium profundum (strain SS9).